A 117-amino-acid polypeptide reads, in one-letter code: Photosystem II reaction center Psb28 protein (117 aa).

Belongs to the Psb28 family. As to quaternary structure, part of the photosystem II complex.

It localises to the cellular thylakoid membrane. The protein is Photosystem II reaction center Psb28 protein of Prochlorococcus marinus (strain MIT 9301).